The chain runs to 858 residues: Volume-regulated anion channel subunit LRRC8D (858 aa).

Over 1–22 the chain is Cytoplasmic; that stretch reads MFTLAEVASLNDIQPTYRILKP. The helical transmembrane segment at 23–48 threads the bilayer; that stretch reads WWDVFMDYLAVVMLMVAIFAGTMQLT. Topologically, residues 49–163 are extracellular; sequence KDQVVCLPVL…YHLALPWYSK (115 aa). Cys-54 and Cys-354 are disulfide-bonded. Residues 118–137 are disordered; sequence AESTFPSQETKKEKRDPTGR. Positions 126–137 are enriched in basic and acidic residues; sequence ETKKEKRDPTGR. A helical transmembrane segment spans residues 164–182; it reads YFPYLALIHTIILMVSSNF. Over 183–308 the chain is Cytoplasmic; sequence WFKYPKTCSK…EDSDLIYKLY (126 aa). The disordered stretch occupies residues 221–251; the sequence is SEENKQRITGAQTLPKHVSTSSDEGSPSAST. Over residues 227 to 251 the composition is skewed to polar residues; the sequence is RITGAQTLPKHVSTSSDEGSPSAST. A phosphoserine mark is found at Ser-241, Ser-242, and Ser-246. Residues 309–330 form a helical membrane-spanning segment; that stretch reads VVQTLIKTAKFIFILCYTANFV. At 331 to 360 the chain is on the extracellular side; it reads NAISFEHVCKPKVEHLTGYEVFECTHNMAY. A helical membrane pass occupies residues 361–386; that stretch reads MLKKLLISYISIICVYGFICLYTLFW. Over 387–858 the chain is Cytoplasmic; it reads LFRIPLKEYS…DVNVPFANGI (472 aa). 13 LRR repeats span residues 514–534, 538–559, 561–582, 589–609, 612–632, 636–657, 659–680, 684–705, 707–728, 730–751, 753–774, 776–797, and 799–820; these read NLQELHLCHCPAKVEQTAFSF, HLRCLHVKFTDVAEIPAWVYLL, NLRELYLIGNLNSENNKMIGLE, HLKILHVKSNLTKVPSNITDV, HLTKLVIHNDGTKLLVLNSLK, NVAELELQNCELERIPHAIFSL, NLQELDLKSNSIRTIEEIISFQ, RLTCLKLWHNKIVAIPPSITHV, NLESLYFSNNKLESLPVAVFSL, KLRCLDVSYNNISTIPIEIGLL, NLQHLHITGNKVDVLPKQLFKC, KLRTLNLGQNCIASLPEKISQL, and QLTQLELKGNCLDRLPAQLGQC.

It belongs to the LRRC8 family. As to quaternary structure, heterohexamer; oligomerizes with other LRRC8 proteins (LRRC8A, LRRC8B, LRRC8C and/or LRRC8E) to form a heterohexamer. In vivo, the subunit composition may depend primarily on expression levels, and heterooligomeric channels containing various proportions of the different LRRC8 proteins may coexist.

The protein resides in the cell membrane. It localises to the endoplasmic reticulum membrane. The catalysed reaction is chloride(in) = chloride(out). It carries out the reaction iodide(out) = iodide(in). It catalyses the reaction taurine(out) = taurine(in). Functionally, non-essential component of the volume-regulated anion channel (VRAC, also named VSOAC channel), an anion channel required to maintain a constant cell volume in response to extracellular or intracellular osmotic changes. The VRAC channel conducts iodide better than chloride and can also conduct organic osmolytes like taurine. Plays a redundant role in the efflux of amino acids, such as aspartate, in response to osmotic stress. Channel activity requires LRRC8A plus at least one other family member (LRRC8B, LRRC8C, LRRC8D or LRRC8E); channel characteristics depend on the precise subunit composition. Also acts as a regulator of glucose-sensing in pancreatic beta cells: VRAC currents, generated in response to hypotonicity- or glucose-induced beta cell swelling, depolarize cells, thereby causing electrical excitation, leading to increase glucose sensitivity and insulin secretion. VRAC channels containing LRRC8D inhibit transport of immunoreactive cyclic dinucleotide GMP-AMP (2'-3'-cGAMP), an immune messenger produced in response to DNA virus in the cytosol. In Rattus norvegicus (Rat), this protein is Volume-regulated anion channel subunit LRRC8D.